A 211-amino-acid chain; its full sequence is B3 domain-containing protein At5g42700 (211 aa).

The segment at residues F110–G201 is a DNA-binding region (TF-B3).

The protein resides in the nucleus. This Arabidopsis thaliana (Mouse-ear cress) protein is B3 domain-containing protein At5g42700.